The primary structure comprises 175 residues: NADH dehydrogenase [ubiquinone] 1 alpha subcomplex assembly factor 4 (175 aa).

Glycine 2 is lipidated: N-myristoyl glycine. Serine 35 is subject to Phosphoserine.

It belongs to the NDUFAF4 family. Binds calmodulin. Interacts with NDUFAF3. As to quaternary structure, (Microbial infection) Interacts with the vesicular stomatitis virus matrix protein/M; the interaction inhibits viral propagation. Post-translationally, phosphorylated on serine. Prolactin stimulate serine phosphorylation.

It is found in the mitochondrion. The protein localises to the membrane. Its function is as follows. Involved in the assembly of mitochondrial NADH:ubiquinone oxidoreductase complex (complex I). May be involved in cell proliferation and survival of hormone-dependent tumor cells. May be a regulator of breast tumor cell invasion. The sequence is that of NADH dehydrogenase [ubiquinone] 1 alpha subcomplex assembly factor 4 from Homo sapiens (Human).